A 377-amino-acid polypeptide reads, in one-letter code: Lactosylceramide 1,3-N-acetyl-beta-D-glucosaminyltransferase (377 aa).

Topologically, residues 1–12 (MLISARRLRRCQ) are cytoplasmic. Residues 13–30 (FFQLLTSCFVLSLMALLV) traverse the membrane as a helical; Signal-anchor for type II membrane protein segment. Residues 31 to 377 (QEDNSLINHV…DTYPCSAAWS (347 aa)) are Lumenal-facing. N-linked (GlcNAc...) asparagine glycans are attached at residues N56, N167, and N275.

It belongs to the glycosyltransferase 31 family.

It localises to the golgi apparatus membrane. The enzyme catalyses a beta-D-Gal-(1-&gt;4)-beta-D-Glc-(1&lt;-&gt;1)-Cer(d18:1(4E)) + UDP-N-acetyl-alpha-D-glucosamine = a beta-D-GlcNAc-(1-&gt;3)-beta-D-Gal-(1-&gt;4)-beta-D-Glc-(1&lt;-&gt;1)-Cer(d18:1(4E)) + UDP + H(+). The catalysed reaction is a neolactoside nLc4Cer(d18:1(4E)) + UDP-N-acetyl-alpha-D-glucosamine = a neolactoside IV(3)-beta-GlcNAc-nLc4Cer(d18:1(4E)) + UDP + H(+). It participates in protein modification; protein glycosylation. Functionally, beta-1,3-N-acetylglucosaminyltransferase that plays a key role in the synthesis of lacto- or neolacto-series carbohydrate chains on glycolipids. In Xenopus tropicalis (Western clawed frog), this protein is Lactosylceramide 1,3-N-acetyl-beta-D-glucosaminyltransferase (b3gnt5).